The following is a 1192-amino-acid chain: DNA topoisomerase 2 (1192 aa).

ATP is bound by residues asparagine 64, asparagine 95, and 142–149 (GTNGVGLK). Mg(2+)-binding residues include glutamate 438, aspartate 539, and aspartate 541. Positions 707-1174 (IPNFLDGMTR…PGASVWLEEI (468 aa)) constitute a Topo IIA-type catalytic domain. The O-(5'-phospho-DNA)-tyrosine intermediate role is filled by tyrosine 800.

This sequence belongs to the type II topoisomerase family. Mg(2+) serves as cofactor. Requires Mn(2+) as cofactor. Ca(2+) is required as a cofactor.

The protein localises to the host cytoplasm. It carries out the reaction ATP-dependent breakage, passage and rejoining of double-stranded DNA.. Its function is as follows. Type II topoisomerase. Processively relaxes supercoiled DNA. Displays DNA-supercoiling activity only when associated with the viral histone-like protein. The polypeptide is DNA topoisomerase 2 (TOP) (African swine fever virus (strain Badajoz 1971 Vero-adapted) (Ba71V)).